A 467-amino-acid chain; its full sequence is 3-isopropylmalate dehydratase large subunit (467 aa).

[4Fe-4S] cluster is bound by residues Cys-349, Cys-409, and Cys-412.

It belongs to the aconitase/IPM isomerase family. LeuC type 1 subfamily. As to quaternary structure, heterodimer of LeuC and LeuD. Requires [4Fe-4S] cluster as cofactor.

It catalyses the reaction (2R,3S)-3-isopropylmalate = (2S)-2-isopropylmalate. It participates in amino-acid biosynthesis; L-leucine biosynthesis; L-leucine from 3-methyl-2-oxobutanoate: step 2/4. Functionally, catalyzes the isomerization between 2-isopropylmalate and 3-isopropylmalate, via the formation of 2-isopropylmaleate. This chain is 3-isopropylmalate dehydratase large subunit, found in Ruegeria sp. (strain TM1040) (Silicibacter sp.).